Here is a 265-residue protein sequence, read N- to C-terminus: Hydroxyacylglutathione hydrolase (265 aa).

Residues His53, His55, Asp57, His58, His109, Asp126, and His164 each coordinate Zn(2+).

This sequence belongs to the metallo-beta-lactamase superfamily. Glyoxalase II family. As to quaternary structure, monomer. Requires Zn(2+) as cofactor.

It carries out the reaction an S-(2-hydroxyacyl)glutathione + H2O = a 2-hydroxy carboxylate + glutathione + H(+). Its pathway is secondary metabolite metabolism; methylglyoxal degradation; (R)-lactate from methylglyoxal: step 2/2. In terms of biological role, thiolesterase that catalyzes the hydrolysis of S-D-lactoyl-glutathione to form glutathione and D-lactic acid. In Dechloromonas aromatica (strain RCB), this protein is Hydroxyacylglutathione hydrolase.